The following is a 335-amino-acid chain: RNA 3'-terminal phosphate cyclase (335 aa).

ATP is bound by residues Gln-101 and 282 to 285 (HMGD). His-306 (tele-AMP-histidine intermediate) is an active-site residue.

Belongs to the RNA 3'-terminal cyclase family. Type 1 subfamily.

The protein resides in the cytoplasm. The catalysed reaction is a 3'-end 3'-phospho-ribonucleotide-RNA + ATP = a 3'-end 2',3'-cyclophospho-ribonucleotide-RNA + AMP + diphosphate. Functionally, catalyzes the conversion of 3'-phosphate to a 2',3'-cyclic phosphodiester at the end of RNA. The mechanism of action of the enzyme occurs in 3 steps: (A) adenylation of the enzyme by ATP; (B) transfer of adenylate to an RNA-N3'P to produce RNA-N3'PP5'A; (C) and attack of the adjacent 2'-hydroxyl on the 3'-phosphorus in the diester linkage to produce the cyclic end product. The biological role of this enzyme is unknown but it is likely to function in some aspects of cellular RNA processing. The protein is RNA 3'-terminal phosphate cyclase of Sulfolobus acidocaldarius (strain ATCC 33909 / DSM 639 / JCM 8929 / NBRC 15157 / NCIMB 11770).